A 102-amino-acid polypeptide reads, in one-letter code: Large ribosomal subunit protein bL21 (102 aa).

Belongs to the bacterial ribosomal protein bL21 family. As to quaternary structure, part of the 50S ribosomal subunit. Contacts protein L20.

Functionally, this protein binds to 23S rRNA in the presence of protein L20. In Marinomonas sp. (strain MWYL1), this protein is Large ribosomal subunit protein bL21.